The chain runs to 191 residues: Molybdenum cofactor guanylyltransferase (191 aa).

GTP contacts are provided by residues 13–15, Lys26, Asp72, and Asp102; that span reads LAG. Asp102 provides a ligand contact to Mg(2+).

The protein belongs to the MobA family. As to quaternary structure, monomer. Mg(2+) serves as cofactor.

Its subcellular location is the cytoplasm. It catalyses the reaction Mo-molybdopterin + GTP + H(+) = Mo-molybdopterin guanine dinucleotide + diphosphate. In terms of biological role, transfers a GMP moiety from GTP to Mo-molybdopterin (Mo-MPT) cofactor (Moco or molybdenum cofactor) to form Mo-molybdopterin guanine dinucleotide (Mo-MGD) cofactor. This is Molybdenum cofactor guanylyltransferase from Pseudomonas putida (strain ATCC 47054 / DSM 6125 / CFBP 8728 / NCIMB 11950 / KT2440).